Here is a 199-residue protein sequence, read N- to C-terminus: Thymidine kinase (199 aa).

ATP is bound by residues 23-30 and 95-98; these read GSMFSGKT and DEAQ. The Proton acceptor role is filled by E96. 4 residues coordinate Zn(2+): C152, C155, C184, and C187.

This sequence belongs to the thymidine kinase family. Homotetramer.

It is found in the cytoplasm. The enzyme catalyses thymidine + ATP = dTMP + ADP + H(+). This Bacteroides fragilis (strain ATCC 25285 / DSM 2151 / CCUG 4856 / JCM 11019 / LMG 10263 / NCTC 9343 / Onslow / VPI 2553 / EN-2) protein is Thymidine kinase.